The primary structure comprises 262 residues: Spindlin-1 (262 aa).

The segment at 1–49 is disordered; the sequence is MKTPFGKTPGQRSRADAGHAGVSANMMKKRTSHKKHRTSVGPSKPVSQP. Residues Lys-7 and Lys-28 each participate in a glycyl lysine isopeptide (Lys-Gly) (interchain with G-Cter in SUMO2) cross-link. The segment covering 27–38 has biased composition (basic residues); that stretch reads MKKRTSHKKHRT. Lys-44 is modified (N6-acetyllysine; alternate). A Glycyl lysine isopeptide (Lys-Gly) (interchain with G-Cter in SUMO2); alternate cross-link involves residue Lys-44. Residues 53–116 are tudor-like domain 1; it reads IVGCRIQHGW…RVSALEVLPD (64 aa). The histone H3K4me3 and H3R8me2a binding stretch occupies residues 93-98; the sequence is GFDCVY. 2 positions are modified to phosphoserine; by AURKA: Ser-109 and Ser-124. The interval 132–193 is tudor-like domain 2; sequence MIGKAVEHMF…DYKEGDLRIM (62 aa). Position 142 (Glu-142) is a region of interest, histone H3K4me3 and H3R8me2a binding. Ser-199 bears the Phosphoserine mark. A tudor-like domain 3 region spans residues 213–262; it reads LVGKQVEYAKEDGSKRTGMVIHQVEAKPSVYFIKFDDDFHIYVYDLVKTS. The interval 250–252 is histone H3K4me3 and H3R8me2a binding; the sequence is DFH.

This sequence belongs to the SPIN/STSY family. As to quaternary structure, homodimer; may form higher-order oligomers. Interacts with TCF7L2/TCF4; the interaction is direct. Interacts with HABP4 and SERBP1. Interacts with SPINDOC; SPINDOC stabilizes SPIN1 and enhances its association with bivalent H3K4me3K9me3 mark. Interacts with SPOCD1; promoting recruitment of PIWIL4 and SPOCD1 to transposons. Post-translationally, phosphorylated during oocyte meiotic maturation.

Its subcellular location is the nucleus. It localises to the nucleolus. In terms of biological role, chromatin reader that specifically recognizes and binds histone H3 both trimethylated at 'Lys-4' and 'Lys-9' (H3K4me3K9me3) and is involved in piRNA-mediated retrotransposon silencing during spermatogenesis. Plays a key role in the initiation of the PIWIL4-piRNA pathway, a pathway that directs transposon DNA methylation and silencing in the male embryonic germ cells, by promoting recruitment of DNA methylation machinery to transposons: binds young, but not old, LINE1 transposons, which are specifically marked with H3K4me3K9me3, and promotes the recruitment of PIWIL4 and SPOCD1 to transposons, leading to piRNA-directed DNA methylation. Also recognizes and binds histone H3 both trimethylated at 'Lys-4' and asymmetrically dimethylated at 'Arg-8' (H3K4me3 and H3R8me2a) and acts as an activator of Wnt signaling pathway downstream of PRMT2. Overexpression induces metaphase arrest and chromosomal instability. Overexpression induces metaphase arrest and chromosomal instability. Localizes to active rDNA loci and promotes the expression of rRNA genes. May play a role in cell-cycle regulation during the transition from gamete to embryo. Involved in oocyte meiotic resumption, a process that takes place before ovulation to resume meiosis of oocytes blocked in prophase I: may act by regulating maternal transcripts to control meiotic resumption. In Rattus norvegicus (Rat), this protein is Spindlin-1 (Spin1).